The following is a 267-amino-acid chain: NAD kinase 2 (267 aa).

The Proton acceptor role is filled by Asp52. Residues 52 to 53 (DA), 124 to 125 (NE), Arg151, Asp153, 164 to 169 (TAYNKS), and Ala188 contribute to the NAD(+) site.

Belongs to the NAD kinase family. A divalent metal cation serves as cofactor.

Its subcellular location is the cytoplasm. The enzyme catalyses NAD(+) + ATP = ADP + NADP(+) + H(+). Involved in the regulation of the intracellular balance of NAD and NADP, and is a key enzyme in the biosynthesis of NADP. Catalyzes specifically the phosphorylation on 2'-hydroxyl of the adenosine moiety of NAD to yield NADP. In Bacillus cereus (strain ATCC 10987 / NRS 248), this protein is NAD kinase 2.